Reading from the N-terminus, the 440-residue chain is Diaminopimelate decarboxylase (440 aa).

The residue at position 61 (K61) is an N6-(pyridoxal phosphate)lysine. Pyridoxal 5'-phosphate-binding positions include G234 and 275–278 (EPGR). Positions 278, 314, and 318 each coordinate substrate. C348 (proton donor) is an active-site residue. E349 and Y384 together coordinate substrate. Position 384 (Y384) interacts with pyridoxal 5'-phosphate. Over residues 421–431 (LAPELEPGPAL) the composition is skewed to low complexity. Residues 421–440 (LAPELEPGPALSPRPSRDPR) form a disordered region.

It belongs to the Orn/Lys/Arg decarboxylase class-II family. LysA subfamily. Homodimer. It depends on pyridoxal 5'-phosphate as a cofactor.

The catalysed reaction is meso-2,6-diaminopimelate + H(+) = L-lysine + CO2. It participates in amino-acid biosynthesis; L-lysine biosynthesis via DAP pathway; L-lysine from DL-2,6-diaminopimelate: step 1/1. Functionally, specifically catalyzes the decarboxylation of meso-diaminopimelate (meso-DAP) to L-lysine. The chain is Diaminopimelate decarboxylase from Streptomyces coelicolor (strain ATCC BAA-471 / A3(2) / M145).